A 679-amino-acid polypeptide reads, in one-letter code: Glycine--tRNA ligase beta subunit (679 aa).

It belongs to the class-II aminoacyl-tRNA synthetase family. As to quaternary structure, tetramer of two alpha and two beta subunits.

It is found in the cytoplasm. It catalyses the reaction tRNA(Gly) + glycine + ATP = glycyl-tRNA(Gly) + AMP + diphosphate. The chain is Glycine--tRNA ligase beta subunit from Streptococcus pyogenes serotype M1.